Reading from the N-terminus, the 270-residue chain is Monofunctional glycosyltransferase (270 aa).

The tract at residues 1 to 35 is disordered; that stretch reads MKRSDRYKTYNKPNDSNDSNQLHHNTYFKPVNKPQ. Positions 11–24 are enriched in polar residues; that stretch reads NKPNDSNDSNQLHH. The helical transmembrane segment at 47-67 threads the bilayer; it reads LLIPILIIIGIIIGVMYALSL.

It belongs to the glycosyltransferase 51 family.

It is found in the cell membrane. The enzyme catalyses [GlcNAc-(1-&gt;4)-Mur2Ac(oyl-L-Ala-gamma-D-Glu-L-Lys-D-Ala-D-Ala)](n)-di-trans,octa-cis-undecaprenyl diphosphate + beta-D-GlcNAc-(1-&gt;4)-Mur2Ac(oyl-L-Ala-gamma-D-Glu-L-Lys-D-Ala-D-Ala)-di-trans,octa-cis-undecaprenyl diphosphate = [GlcNAc-(1-&gt;4)-Mur2Ac(oyl-L-Ala-gamma-D-Glu-L-Lys-D-Ala-D-Ala)](n+1)-di-trans,octa-cis-undecaprenyl diphosphate + di-trans,octa-cis-undecaprenyl diphosphate + H(+). It participates in cell wall biogenesis; peptidoglycan biosynthesis. Functionally, peptidoglycan polymerase that catalyzes glycan chain elongation using lipid-linked disaccharide-pentapeptide as the substrate. The sequence is that of Monofunctional glycosyltransferase from Staphylococcus saprophyticus subsp. saprophyticus (strain ATCC 15305 / DSM 20229 / NCIMB 8711 / NCTC 7292 / S-41).